The primary structure comprises 591 residues: Glutathione hydrolase (591 aa).

Positions 1 to 41 are cleaved as a signal peptide; sequence MASKWIEEQPLVHRRDIRISSKSRIAAGLLVLLVLWRYGLP. R122 contacts L-glutamate. N-linked (GlcNAc...) asparagine glycosylation is found at N135, N270, and N389. T393 functions as the Nucleophile in the catalytic mechanism. Residues T411, E432, and 464–465 contribute to the L-glutamate site; that span reads SA. N534 is a glycosylation site (N-linked (GlcNAc...) asparagine).

It belongs to the gamma-glutamyltransferase family.

It carries out the reaction an N-terminal (5-L-glutamyl)-[peptide] + an alpha-amino acid = 5-L-glutamyl amino acid + an N-terminal L-alpha-aminoacyl-[peptide]. The catalysed reaction is glutathione + H2O = L-cysteinylglycine + L-glutamate. The enzyme catalyses an S-substituted glutathione + H2O = an S-substituted L-cysteinylglycine + L-glutamate. Its pathway is mycotoxin biosynthesis. In terms of biological role, gamma-glutamyltransferase; part of the gene cluster that mediates the biosynthesis of the secondary metabolite ustiloxin B, an antimitotic tetrapeptide. First, ustA is processed by the subtilisin-like endoprotease Kex2 that is outside the ustiloxin B gene cluster, at the C-terminal side of Arg-Lys, after transfer to Golgi apparatus through the endoplasmic reticulum (ER). Cleavage by KEX2 generates 16 peptides YAIG-I to YAIG-XVI. To process the precursor peptide further, at least two peptidases are necessary to cleave the N-terminal and C-terminal sides of the Tyr-Ala-Ile-Gly core peptide which serves as backbone for the synthesis of ustiloxin B, through cyclization and modification of the tyrosine with a non-protein coding amino acid, norvaline. One of the two peptidases must be the serine peptidase ustP; and the other pepdidase is probably ustH. Macrocyclization of the core peptide derived from ustA requires the tyrosinase ustQ, as well as the homologous oxidases ustYa and ustYb, and leads to the production of the first cyclization product N-desmethylustiloxin F. For the formation of N-desmethylustiloxin F, three oxidation steps are required, hydroxylation at the benzylic position, hydroxylation at either the aromatic ring of Tyr or beta-position of Ile, and oxidative cyclization. UstQ may catalyze the oxidation of a phenol moiety, whereas the ustYa and ustYb are most likely responsible for the remaining two-step oxidations. N-desmethylustiloxin F is then methylated by ustM to yield ustiloxin F which in turn substrate of the cytochrome P450 monooxygenase ustC which catalyzes the formation of S-deoxyustiloxin H. The flavoprotein monooxygenases ustF1 and ustF2 then participate in the modification of the side chain of S-deoxyustiloxin H, leading to the synthesis of an oxime intermediate, via ustiloxin H. Finally, carboxylative dehydration performed by the cysteine desulfurase-like protein ustD yields ustiloxin B. The polypeptide is Glutathione hydrolase (Aspergillus flavus (strain ATCC 200026 / FGSC A1120 / IAM 13836 / NRRL 3357 / JCM 12722 / SRRC 167)).